A 112-amino-acid chain; its full sequence is 2Fe-2S ferredoxin (112 aa).

Positions 5–107 (IKVTFIINDG…GIKVRLPSAT (103 aa)) constitute a 2Fe-2S ferredoxin-type domain. Residues Cys42, Cys48, Cys51, and Cys88 each contribute to the [2Fe-2S] cluster site.

Belongs to the adrenodoxin/putidaredoxin family. The cofactor is [2Fe-2S] cluster.

Functionally, ferredoxin are iron-sulfur proteins that transfer electrons in a wide variety of metabolic reactions. The chain is 2Fe-2S ferredoxin (fdxB) from Rickettsia montanensis.